Consider the following 230-residue polypeptide: Ribose-5-phosphate isomerase A (230 aa).

Substrate is bound by residues 31–34 (TGST), 88–91 (DGSD), and 101–104 (KGGG). The active-site Proton acceptor is the Glu-110. Residue Lys-128 coordinates substrate.

This sequence belongs to the ribose 5-phosphate isomerase family. As to quaternary structure, homodimer.

It catalyses the reaction aldehydo-D-ribose 5-phosphate = D-ribulose 5-phosphate. It functions in the pathway carbohydrate degradation; pentose phosphate pathway; D-ribose 5-phosphate from D-ribulose 5-phosphate (non-oxidative stage): step 1/1. Its function is as follows. Catalyzes the reversible conversion of ribose-5-phosphate to ribulose 5-phosphate. The chain is Ribose-5-phosphate isomerase A from Lactobacillus acidophilus (strain ATCC 700396 / NCK56 / N2 / NCFM).